The following is a 389-amino-acid chain: 26S proteasome regulatory subunit 10B (389 aa).

Lysine 72 is subject to N6-acetyllysine. 174–181 (GPPGTGKT) contributes to the ATP binding site. Lysine 206 is modified (N6-acetyllysine). Phosphoserine is present on serine 244.

Belongs to the AAA ATPase family. Component of the 19S proteasome regulatory particle complex. The 26S proteasome consists of a 20S core particle (CP) and two 19S regulatory subunits (RP). The regulatory particle is made of a lid composed of 9 subunits, a base containing 6 ATPases including PSMC6 and few additional components. Interacts with PAAF1.

The protein localises to the cytoplasm. Its subcellular location is the nucleus. Functionally, component of the 26S proteasome, a multiprotein complex involved in the ATP-dependent degradation of ubiquitinated proteins. This complex plays a key role in the maintenance of protein homeostasis by removing misfolded or damaged proteins, which could impair cellular functions, and by removing proteins whose functions are no longer required. Therefore, the proteasome participates in numerous cellular processes, including cell cycle progression, apoptosis, or DNA damage repair. PSMC6 belongs to the heterohexameric ring of AAA (ATPases associated with diverse cellular activities) proteins that unfolds ubiquitinated target proteins that are concurrently translocated into a proteolytic chamber and degraded into peptides. This is 26S proteasome regulatory subunit 10B (PSMC6) from Homo sapiens (Human).